The chain runs to 807 residues: Glycerol-3-phosphate acyltransferase (807 aa).

Residues 308–313 (CHRSHM) carry the HXXXXD motif motif.

The protein belongs to the GPAT/DAPAT family.

It is found in the cell inner membrane. The enzyme catalyses sn-glycerol 3-phosphate + an acyl-CoA = a 1-acyl-sn-glycero-3-phosphate + CoA. The protein operates within phospholipid metabolism; CDP-diacylglycerol biosynthesis; CDP-diacylglycerol from sn-glycerol 3-phosphate: step 1/3. The polypeptide is Glycerol-3-phosphate acyltransferase (Shewanella baltica (strain OS195)).